The chain runs to 440 residues: Adenylyltransferase and sulfurtransferase UBA4 (440 aa).

An N-acetylmethionine modification is found at methionine 1. Residues glycine 77, aspartate 98, 105 to 109 (SNLHR), lysine 122, and 166 to 167 (DS) each bind ATP. Residues cysteine 208 and cysteine 211 each coordinate Zn(2+). Cysteine 225 (glycyl thioester intermediate; for adenylyltransferase activity) is an active-site residue. The Zn(2+) site is built by cysteine 286 and cysteine 289. A Phosphoserine modification is found at serine 326. One can recognise a Rhodanese domain in the interval 339–438 (FLAKHIFLDV…YIDDIDQTIP (100 aa)). The active-site Cysteine persulfide intermediate; for sulfurtransferase activity is cysteine 397.

It in the N-terminal section; belongs to the HesA/MoeB/ThiF family. UBA4 subfamily. Zn(2+) is required as a cofactor.

The protein resides in the cytoplasm. It is found in the cytosol. Its pathway is tRNA modification; 5-methoxycarbonylmethyl-2-thiouridine-tRNA biosynthesis. Plays a central role in 2-thiolation of mcm(5)S(2)U at tRNA wobble positions of cytosolic tRNA(Lys), tRNA(Glu) and tRNA(Gln). Acts by mediating the C-terminal thiocarboxylation of sulfur carrier URM1. Its N-terminus first activates URM1 as acyl-adenylate (-COAMP), then the persulfide sulfur on the catalytic cysteine is transferred to URM1 to form thiocarboxylation (-COSH) of its C-terminus. The reaction probably involves hydrogen sulfide that is generated from the persulfide intermediate and that acts as a nucleophile towards URM1. Subsequently, a transient disulfide bond is formed. Does not use thiosulfate as sulfur donor; NFS1 probably acting as a sulfur donor for thiocarboxylation reactions. Prior mcm(5) tRNA modification by the elongator complex is required for 2-thiolation. May also be involved in protein urmylation. The sequence is that of Adenylyltransferase and sulfurtransferase UBA4 from Saccharomyces cerevisiae (strain RM11-1a) (Baker's yeast).